The following is a 227-amino-acid chain: (S)-2-haloacid dehalogenase (227 aa).

D10 serves as the catalytic Nucleophile. Residues 11-12 (LY), R41, and 118-119 (SN) each bind an (S)-2-haloacid. The important for catalytic activity stretch occupies residues 175–180 (SSNAWD).

The protein belongs to the HAD-like hydrolase superfamily. S-2-haloalkanoic acid dehalogenase family. Homotetramer.

It catalyses the reaction an (S)-2-haloacid + H2O = a (2R)-2-hydroxycarboxylate + a halide anion + H(+). It carries out the reaction (S)-2-chloropropanoate + H2O = (R)-lactate + chloride + H(+). Catalyzes the hydrolytic dehalogenation of small (S)-2-haloalkanoic acids to yield the corresponding (R)-2-hydroxyalkanoic acids. Acts on acids of short chain lengths, C(2) to C(4), with inversion of configuration at C-2. Active with 2-halogenated carboxylic acids and converts only the S-isomer (or L-isomer) of 2-chloropropionic acid with inversion of configuration to produce R-lactate (or D-isomer). The polypeptide is (S)-2-haloacid dehalogenase (Pseudomonas putida (Arthrobacter siderocapsulatus)).